The following is a 136-amino-acid chain: MLQPKRTKFRKVQTGRNRGLAKGTDVSFGEFGLKAVGRGRLTARQIEAARRAMTRHVKRQGKIWIRVFPDKPITEKPLEVRQGKGKGNVEYWVAQIQPGKVMYEMGGVPEELAREAFRLAARKLPFKTTFVTKQVM.

The protein belongs to the universal ribosomal protein uL16 family. As to quaternary structure, part of the 50S ribosomal subunit.

Functionally, binds 23S rRNA and is also seen to make contacts with the A and possibly P site tRNAs. In Vibrio campbellii (strain ATCC BAA-1116), this protein is Large ribosomal subunit protein uL16.